The chain runs to 187 residues: Ribosome-recycling factor (187 aa).

The protein belongs to the RRF family.

It is found in the cytoplasm. Its function is as follows. Responsible for the release of ribosomes from messenger RNA at the termination of protein biosynthesis. May increase the efficiency of translation by recycling ribosomes from one round of translation to another. The protein is Ribosome-recycling factor of Xanthobacter autotrophicus (strain ATCC BAA-1158 / Py2).